We begin with the raw amino-acid sequence, 324 residues long: Geranylgeranyl diphosphate synthase (324 aa).

Isopentenyl diphosphate-binding residues include Lys-46, Arg-49, and His-78. Mg(2+)-binding residues include Asp-85 and Asp-89. Arg-94 lines the an all-trans-polyprenyl diphosphate pocket. Arg-95 is an isopentenyl diphosphate binding site. An all-trans-polyprenyl diphosphate is bound by residues Lys-176, Thr-177, Gln-214, Lys-231, and Lys-241.

This sequence belongs to the FPP/GGPP synthase family. The cofactor is Mg(2+).

It catalyses the reaction isopentenyl diphosphate + (2E,6E)-farnesyl diphosphate = (2E,6E,10E)-geranylgeranyl diphosphate + diphosphate. It participates in isoprenoid biosynthesis; geranylgeranyl diphosphate biosynthesis; geranylgeranyl diphosphate from farnesyl diphosphate and isopentenyl diphosphate: step 1/1. Functionally, catalyzes the sequential condensation of isopentenyl pyrophosphate with the allylic pyrophosphates to yield geranylgeranyl diphosphate (GGPP) which is a precursor of the ether-linked lipids. This is Geranylgeranyl diphosphate synthase from Methanosarcina mazei (strain ATCC BAA-159 / DSM 3647 / Goe1 / Go1 / JCM 11833 / OCM 88) (Methanosarcina frisia).